The following is a 37-amino-acid chain: MPSWHGMVLLPYVKHTHASTHTHTHNIYGCACELVFH.

Functionally, regulatory peptide encoded by the primary transcript (pri-miR164a) of the microRNA miR164a that enhances the accumulation of its corresponding mature miRNA. Acts probably as a transcriptional activator of its corresponding pri-miRNA. The sequence is that of Peptide encoded by miPEP164a from Arabidopsis thaliana (Mouse-ear cress).